Consider the following 210-residue polypeptide: Acetoin utilization protein AcuA (210 aa).

The N-acetyltransferase domain occupies 19–189; that stretch reads VLIEGPISPE…ANCLMARIGK (171 aa).

Belongs to the acetyltransferase family. As to quaternary structure, monomer.

It functions in the pathway ketone degradation; acetoin degradation. Its function is as follows. Part of the acuABC operon, which is possibly involved in the breakdown of acetoin and butanediol. Acts as an acetyltransferase inactivating acetyl-CoA synthetase AcsA via acetylation at a Lys residue. In Bacillus licheniformis (strain ATCC 14580 / DSM 13 / JCM 2505 / CCUG 7422 / NBRC 12200 / NCIMB 9375 / NCTC 10341 / NRRL NRS-1264 / Gibson 46), this protein is Acetoin utilization protein AcuA.